The primary structure comprises 398 residues: 1-deoxy-D-xylulose 5-phosphate reductoisomerase (398 aa).

Threonine 11, glycine 12, serine 13, isoleucine 14, arginine 38, asparagine 39, and asparagine 125 together coordinate NADPH. A 1-deoxy-D-xylulose 5-phosphate-binding site is contributed by lysine 126. Glutamate 127 provides a ligand contact to NADPH. Aspartate 151 serves as a coordination point for Mn(2+). The 1-deoxy-D-xylulose 5-phosphate site is built by serine 152, glutamate 153, serine 179, and histidine 202. Residue glutamate 153 participates in Mn(2+) binding. Glycine 208 lines the NADPH pocket. Positions 215, 220, 221, and 224 each coordinate 1-deoxy-D-xylulose 5-phosphate. Glutamate 224 is a Mn(2+) binding site.

It belongs to the DXR family. The cofactor is Mg(2+). It depends on Mn(2+) as a cofactor.

The catalysed reaction is 2-C-methyl-D-erythritol 4-phosphate + NADP(+) = 1-deoxy-D-xylulose 5-phosphate + NADPH + H(+). Its pathway is isoprenoid biosynthesis; isopentenyl diphosphate biosynthesis via DXP pathway; isopentenyl diphosphate from 1-deoxy-D-xylulose 5-phosphate: step 1/6. In terms of biological role, catalyzes the NADPH-dependent rearrangement and reduction of 1-deoxy-D-xylulose-5-phosphate (DXP) to 2-C-methyl-D-erythritol 4-phosphate (MEP). The chain is 1-deoxy-D-xylulose 5-phosphate reductoisomerase from Burkholderia cenocepacia (strain HI2424).